Consider the following 220-residue polypeptide: GTP cyclohydrolase 1 (220 aa).

Zn(2+)-binding residues include C113, H116, and C184.

The protein belongs to the GTP cyclohydrolase I family. In terms of assembly, homomer.

It carries out the reaction GTP + H2O = 7,8-dihydroneopterin 3'-triphosphate + formate + H(+). The protein operates within cofactor biosynthesis; 7,8-dihydroneopterin triphosphate biosynthesis; 7,8-dihydroneopterin triphosphate from GTP: step 1/1. This Hamiltonella defensa subsp. Acyrthosiphon pisum (strain 5AT) protein is GTP cyclohydrolase 1.